Reading from the N-terminus, the 142-residue chain is Hemoglobin subunit alpha (142 aa).

The 141-residue stretch at 2–142 folds into the Globin domain; the sequence is VLSAADKTNV…VSTVLTSKYR (141 aa). At serine 4 the chain carries Phosphoserine. Position 8 is an N6-succinyllysine (lysine 8). Threonine 9 carries the post-translational modification Phosphothreonine. Lysine 12 is subject to N6-succinyllysine. Lysine 17 bears the N6-acetyllysine; alternate mark. Lysine 17 carries the N6-succinyllysine; alternate modification. Lysine 41 is modified (N6-succinyllysine). At serine 50 the chain carries Phosphoserine. Histidine 59 contacts O2. A heme b-binding site is contributed by histidine 88. A Phosphoserine modification is found at serine 103. Threonine 109 bears the Phosphothreonine mark. Serine 125 and serine 132 each carry phosphoserine. Threonine 135 and threonine 138 each carry phosphothreonine. Position 139 is a phosphoserine (serine 139).

It belongs to the globin family. As to quaternary structure, heterotetramer of two alpha chains and two beta chains. In terms of tissue distribution, red blood cells.

Involved in oxygen transport from the lung to the various peripheral tissues. In terms of biological role, hemopressin acts as an antagonist peptide of the cannabinoid receptor CNR1. Hemopressin-binding efficiently blocks cannabinoid receptor CNR1 and subsequent signaling. The chain is Hemoglobin subunit alpha (HBA) from Equus przewalskii (Przewalski's horse).